Reading from the N-terminus, the 1024-residue chain is E3 ISG15--protein ligase HERC5 (1024 aa).

A compositionally biased stretch (basic residues) spans M1–G13. A disordered region spans residues M1–S28. RCC1 repeat units lie at residues N96–K155, G156–M208, S209–Q260, G262–S312, and L314–I364. In terms of domain architecture, HECT spans E702–G1024. The Glycyl thioester intermediate role is filled by C994.

As to quaternary structure, (Microbial infection) Interacts with human cytomegalovirus protein UL26; this interaction inhibits global protein ISGylation. (Microbial infection) Interacts with Kaposi's sarcoma-associated herpesvirus protein v-IRF1; this interaction inhibits global protein ISGylation. In terms of assembly, binds to CCNA1, CCNB1, CCND1 and CCNE1. Interacts with UBE2L6. Interacts with IRF3, this interaction is marginal in resting cells but enhanced upon viral infection. Interacts with influenza A virus NS1. ISGylated. In terms of tissue distribution, expressed in testis and to a lesser degree in brain, ovary and placenta. Found in most tissues at low levels.

It localises to the cytoplasm. It is found in the perinuclear region. Its function is as follows. Major E3 ligase for ISG15 conjugation. Acts as a positive regulator of innate antiviral response in cells induced by interferon. Functions as part of the ISGylation machinery that recognizes target proteins in a broad and relatively non-specific manner. Catalyzes ISGylation of IRF3 which results in sustained activation, it attenuates IRF3-PIN1 interaction, which antagonizes IRF3 ubiquitination and degradation, and boosts the antiviral response. Mediates ISGylation of the phosphatase PTEN leading to its degradation, thus alleviating its suppression of the PI3K-AKT signaling pathway and promoting the production of cytokines that facilitate bacterial clearance. Interferes with the function of key viral structural proteins such as ebolavirus structural protein VP40 or HIV-1 protein GAG. Catalyzes ISGylation of influenza A viral NS1 which attenuates virulence; ISGylated NS1 fails to form homodimers and thus to interact with its RNA targets. Catalyzes ISGylation of papillomavirus type 16 L1 protein which results in dominant-negative effect on virus infectivity. Physically associated with polyribosomes, broadly modifies newly synthesized proteins in a cotranslational manner. In an interferon-stimulated cell, newly translated viral proteins are primary targets of ISG15. Promotes parkin/PRKN ubiquitin E3 ligase activity by suppressing the intramolecular interaction that maintains its autoinhibited conformation. In terms of biological role, (Microbial infection) Functions as an E3 ligase for ISGylation of hepatitis B virus protein X leading to enhanced viral replication due to increased interferon resistance. The polypeptide is E3 ISG15--protein ligase HERC5 (HERC5) (Homo sapiens (Human)).